The sequence spans 530 residues: Type 2 DNA topoisomerase 6 subunit B (530 aa).

ATP contacts are provided by residues asparagine 42, aspartate 76, serine 97 to lysine 98, glycine 106 to lysine 113, and lysine 427.

The protein belongs to the TOP6B family. As to quaternary structure, homodimer. Heterotetramer of two Top6A and two Top6B chains.

The catalysed reaction is ATP-dependent breakage, passage and rejoining of double-stranded DNA.. In terms of biological role, relaxes both positive and negative superturns and exhibits a strong decatenase activity. The protein is Type 2 DNA topoisomerase 6 subunit B of Saccharolobus islandicus (strain Y.N.15.51 / Yellowstone #2) (Sulfolobus islandicus).